The chain runs to 121 residues: Large ribosomal subunit protein uL18 (121 aa).

It belongs to the universal ribosomal protein uL18 family. As to quaternary structure, part of the 50S ribosomal subunit; part of the 5S rRNA/L5/L18/L25 subcomplex. Contacts the 5S and 23S rRNAs.

In terms of biological role, this is one of the proteins that bind and probably mediate the attachment of the 5S RNA into the large ribosomal subunit, where it forms part of the central protuberance. This is Large ribosomal subunit protein uL18 from Ureaplasma urealyticum serovar 10 (strain ATCC 33699 / Western).